The following is a 462-amino-acid chain: Cysteine--tRNA ligase (462 aa).

Cysteine 24 serves as a coordination point for Zn(2+). The 'HIGH' region signature appears at 26–36 (PTVYDDAHLGH). Zn(2+)-binding residues include cysteine 199, histidine 224, and glutamate 228. The short motif at 256–260 (KMSKS) is the 'KMSKS' region element. Lysine 259 contributes to the ATP binding site.

It belongs to the class-I aminoacyl-tRNA synthetase family. Monomer. The cofactor is Zn(2+).

The protein localises to the cytoplasm. It catalyses the reaction tRNA(Cys) + L-cysteine + ATP = L-cysteinyl-tRNA(Cys) + AMP + diphosphate. This Campylobacter jejuni subsp. jejuni serotype O:2 (strain ATCC 700819 / NCTC 11168) protein is Cysteine--tRNA ligase (cysS).